The following is a 118-amino-acid chain: T cell receptor gamma variable 8 (118 aa).

An N-terminal signal peptide occupies residues Met1–Gln17. One can recognise an Ig-like domain in the interval Lys18–Arg118. The cysteines at positions 41 and 113 are disulfide-linked.

Gamma-delta TR is a heterodimer composed of a gamma and delta chain; disulfide-linked. The gamma-delta TR is associated with the transmembrane signaling CD3 coreceptor proteins following the stoichiometry: a single gamma-delta TR heterodimer associates with one CD3D-CD3E heterodimer, one CD3G-CD3E heterodimer and one CD247 homodimer forming a stable octameric structure. Upon activation, gamma-delta TR complex associates with FCER1G to initiate intracellular signaling.

It is found in the cell membrane. Its function is as follows. V region of the variable domain of T cell receptor (TR) gamma chain that participates in the antigen recognition. Gamma-delta TRs recognize a variety of self and foreign non-peptide antigens frequently expressed at the epithelial boundaries between the host and external environment, including endogenous lipids presented by MH-like protein CD1D and phosphoantigens presented by butyrophilin-like molecule BTN3A1. Upon antigen recognition induces rapid, innate-like immune responses involved in pathogen clearance and tissue repair. Binding of gamma-delta TR complex to antigen triggers phosphorylation of immunoreceptor tyrosine-based activation motifs (ITAMs) in the CD3 chains by the LCK and FYN kinases, allowing the recruitment, phosphorylation, and activation of ZAP70 that facilitates phosphorylation of the scaffolding proteins LCP2 and LAT. This lead to the formation of a supramolecular signalosome that recruits the phospholipase PLCG1, resulting in calcium mobilization and ERK activation, ultimately leading to T cell expansion and differentiation into effector cells. Gamma-delta TRs are produced through somatic rearrangement of a limited repertoire of variable (V), diversity (D), and joining (J) genes. The potential diversity of gamma-delta TRs is conferred by the unique ability to rearrange (D) genes in tandem and to utilize all three reading frames. The combinatorial diversity is considerably increased by the sequence exonuclease trimming and random nucleotide (N) region additions which occur during the V-(D)-J rearrangements. The polypeptide is T cell receptor gamma variable 8 (Homo sapiens (Human)).